A 343-amino-acid polypeptide reads, in one-letter code: Protease HtpX homolog (343 aa).

Helical transmembrane passes span 7–24 (TMLLAFMTALFMGVGYLV) and 29–46 (GMVVALFIAGGLNFFSYW). H130 contributes to the Zn(2+) binding site. The active site involves E131. H134 is a binding site for Zn(2+). 2 helical membrane passes run 145–165 (LTATIAGAISMLGNFALLMGM) and 177–197 (GAGMLGTVIALFVAPFAAMLV). Position 206 (E206) interacts with Zn(2+). Positions 308–343 (NLEDEDLNPEAQNGFTHNQKKKTVRRGKDRPTWLRH) are disordered. Positions 325–335 (NQKKKTVRRGK) are enriched in basic residues.

It belongs to the peptidase M48B family. Zn(2+) serves as cofactor.

Its subcellular location is the cell inner membrane. This Bartonella bacilliformis (strain ATCC 35685 / KC583 / Herrer 020/F12,63) protein is Protease HtpX homolog.